The following is a 191-amino-acid chain: uncharacterized protein (191 aa).

The protein to E.coli YecM.

This is an uncharacterized protein from Haemophilus influenzae (strain ATCC 51907 / DSM 11121 / KW20 / Rd).